We begin with the raw amino-acid sequence, 207 residues long: Urease accessory protein UreE (207 aa).

The segment at 171–207 (HHGHAHSHSHSHDHDHDHDHDHQHGPGCAHGHGHDHH) is disordered. Residues 180 to 194 (HSHDHDHDHDHDHQH) show a composition bias toward basic and acidic residues.

Belongs to the UreE family.

The protein localises to the cytoplasm. Involved in urease metallocenter assembly. Binds nickel. Probably functions as a nickel donor during metallocenter assembly. In Burkholderia lata (strain ATCC 17760 / DSM 23089 / LMG 22485 / NCIMB 9086 / R18194 / 383), this protein is Urease accessory protein UreE.